Reading from the N-terminus, the 44-residue chain is DKLIGSCVWGAVNYTSNCNAECKRRGYKGGHCGSFANVNCWCET.

Cystine bridges form between cysteine 7–cysteine 32, cysteine 18–cysteine 40, and cysteine 22–cysteine 42.

It localises to the secreted. Possesses potent anti-fungal activity. This chain is Defensin ARD1, found in Archaeoprepona demophon (One-spotted leafwing butterfly).